Here is a 1054-residue protein sequence, read N- to C-terminus: Probable sucrose-phosphate synthase 1 (1054 aa).

Over residues 104–115 (RLERERGRREAV) the composition is skewed to basic and acidic residues. Disordered stretches follow at residues 104 to 125 (RLER…LSEG), 674 to 693 (LRNE…SDSL), and 708 to 727 (DGDK…DDRA).

The protein belongs to the glycosyltransferase 1 family. Homodimer or homotetramer.

The enzyme catalyses beta-D-fructose 6-phosphate + UDP-alpha-D-glucose = sucrose 6(F)-phosphate + UDP + H(+). Its pathway is glycan biosynthesis; sucrose biosynthesis; sucrose from D-fructose 6-phosphate and UDP-alpha-D-glucose: step 1/2. Activity is regulated by phosphorylation and moderated by concentration of metabolites and light. In terms of biological role, plays a role in photosynthetic sucrose synthesis by catalyzing the rate-limiting step of sucrose biosynthesis from UDP-glucose and fructose- 6-phosphate. Involved in the regulation of carbon partitioning in the leaves of plants. May regulate the synthesis of sucrose and therefore play a major role as a limiting factor in the export of photoassimilates out of the leaf. Plays a role for sucrose availability that is essential for plant growth and fiber elongation. The protein is Probable sucrose-phosphate synthase 1 (SPS1) of Craterostigma plantagineum (Blue gem).